Here is a 1404-residue protein sequence, read N- to C-terminus: MKALLDLFKQVTQKEEFDSIKIGLASPEKIRSWSYGEVKKPETINYRTFKPERDGLFCAKIFGPVKDYECLCGKYKRLKHRGVICEKCGVEVTLSRIRRERMGHIELASPVAHIWFLKSLPSRLGLVLDITLRDIERVLYFEAYIVTDPGMTPLTRGQLLTEDDYLNKTEEFGDDFSAAMGAEGIRALLNSMDILSEIESLRLEIQTTGSETKIKKAAKRLKVLEAFNKSGMKPEWMILTVLPVLPPELRPLVPLDGGRFATSDLNDLYRRVINRNNRLKRLLELRAPEIIIRNEKRMLQESVDSLLDNGRRGKAMTGANKRPLKSLADMIKGKGGRFRQNLLGKRVDYSGRSVIVVGPQLKLHQCGLPKKMALELFKPFIFNKLEVMGVASTIKAAKREVENENPIVWDILEEVIREHPVMLNRAPTLHRLGIQAFEPVLIEGKAIQLHPLVCAAFNADFDGDQMAVHVPLSLEAQMECRTLMLSTNNVLSPANGDPIIVPSQDIVLGLYYMTREKVGAQGEGMVFSDVSEITRAYESKALELNARITVRIKEKKKSCGHGEDPIETITRFETTVGRALISEILPAGLPFALVNKTLKKKEISKLINASFRLCGLRETVIFADKLMYSGFSYATRGGISICLDDLVTPSQKTGIIQAAEQEIHEIANQYISGLVTQGERYNKVVDIWARAGDQVAKAMMDQLSVEPVKDQETGEIRTDKNGQAVTQESFNSIYMMADSGARGSAAQIRQLSGMRGLMAKPDGSIIETPITANFREGLNILQYFISTHGARKGLADTALKTANSGYLTRRLVDVTQDLVIIENDCGTDGGVVMKALVEGGNVVESLRGRILGRVAATDVINPETGEVICSEGTLLDEDTADEIEACSVDEVKVRTPLTCETRYGLCAKCYGRDLGRGTPVNVGEAVGVIAAQSIGEPGTQLTMRTFHIGGAASRAVVANQAESKSNGVVRYSHHIRYVKNAQNELIIISRSGEILIQDENGRERERHKIPYGATLHVQDGETIKAGQILGSWEPHKRPIITEYAGKIRFENVEEGVTVVRQIDEITGMATLVVIDPKRRNIAQSKGLRPLVKFLDENDQEINIPGTDQPVSITFHVGSIITVRDGQQVGIGEVLARIPQETSKTRDITGGLPRVAELFEARVPKDAGFLAEATGTVAFGKDTKGKQRLVITDLDGIAHEYLIPKDKHVTAHDGQVVNKGEVIVDGPIDPHDILRLQGVEALAKYISDEVQDVYRLQGVSINDKHIEVIVRQMLRRVQITNAGDSAFILGEQVERAEVLAENEKLITENKMPATYEYVLLGITKASLSTDSFISAASFQETTRVLTEASIMGKKDDLRGLKENVIVGRLIPAGTGLSFHNIRKKQRLSESTVYLDADLTENEIAE.

4 residues coordinate Zn(2+): C70, C72, C85, and C88. Residues D460, D462, and D464 each coordinate Mg(2+). The Zn(2+) site is built by C825, C899, C906, and C909.

It belongs to the RNA polymerase beta' chain family. The RNAP catalytic core consists of 2 alpha, 1 beta, 1 beta' and 1 omega subunit. When a sigma factor is associated with the core the holoenzyme is formed, which can initiate transcription. Requires Mg(2+) as cofactor. Zn(2+) is required as a cofactor.

The enzyme catalyses RNA(n) + a ribonucleoside 5'-triphosphate = RNA(n+1) + diphosphate. Its function is as follows. DNA-dependent RNA polymerase catalyzes the transcription of DNA into RNA using the four ribonucleoside triphosphates as substrates. This chain is DNA-directed RNA polymerase subunit beta', found in Nitrosomonas eutropha (strain DSM 101675 / C91 / Nm57).